We begin with the raw amino-acid sequence, 713 residues long: MTEELITPVYCTGVSAQVQKKRDKELGLGRHENAIKYLGQDYETLRARCLQSGVLFQDEAFPPVSHSLGFKELGPHSSKTYGIKWKRPTELMSNPQFIVDGATRTDICQGALGDCWLLAAIASLTLNETILHRVVPYGQSFQDGYAGIFHFQLWQFGEWVDVVIDDLLPTKDGKLVFVHSAQGNEFWSALLEKAYAKVNGSYEALSGGCTSEAFEDFTGGVTEWYDLQKAPSDLYQIILKALERGSLLGCSINISDIRDLEAITFKNLVRGHAYSVTGAKQVTYQGQRVNLIRMRNPWGEVEWKGPWSDSSYEWNKVDPYEREQLRVKMEDGEFWMSFRDFIREFTKLEICNLTPDALKSRTLRNWNTTFYEGTWRRGSTAGGCRNYPATFWVNPQFKIRLEEVDDADDYDNRESGCSFLLALMQKHRRRERRFGRDMETIGFAVYQVPRELAGQPVHLKRDFFLANASRAQSEHFINLREVSNRIRLPPGEYIVVPSTFEPNKEGDFLLRFFSEKKAGTQELDDQIQANLPDEKVLSEEEIDDNFKTLFSKLAGDDMEISVKELQTILNRIISKHKDLRTNGFSLESCRSMVNLMDRDGNGKLGLVEFNILWNRIRNYLTIFRKFDLDKSGSMSAYEMRMAIEAAGFKLNKKLHELIITRYSEPDLAVDFDNFVCCLVRLETMFRFFKLLDTDLDGVVTFDLFKWLQLTMFA.

Residues 55-354 form the Calpain catalytic domain; the sequence is LFQDEAFPPV…FTKLEICNLT (300 aa). Ca(2+) is bound by residues glutamine 109 and aspartate 114. Catalysis depends on residues cysteine 115, histidine 272, and asparagine 296. Ca(2+) is bound by residues aspartate 318 and glutamate 323. Threonine 354 bears the Phosphothreonine mark. A domain III region spans residues 355 to 525; the sequence is PDALKSRTLR…KKAGTQELDD (171 aa). Residues 526–541 are linker; sequence QIQANLPDEKVLSEEE. EF-hand domains lie at 540-575, 584-617, 614-649, and 679-713; these read EEID…IISK, FSLE…NRIR, NRIR…AGFK, and VRLE…TMFA. The interval 542 to 712 is domain IV; sequence IDDNFKTLFS…LFKWLQLTMF (171 aa). 10 residues coordinate Ca(2+): aspartate 597, aspartate 599, asparagine 601, lysine 603, glutamate 608, aspartate 627, aspartate 629, serine 631, serine 633, and glutamate 638.

This sequence belongs to the peptidase C2 family. In terms of assembly, forms a heterodimer with a small (regulatory) subunit CAPNS1. Requires Ca(2+) as cofactor. Post-translationally, undergoes calcium-induced successive autoproteolytic cleavages that generate a membrane-bound 78 kDa active form and an intracellular 75 kDa active form. Calpastatin reduces with high efficiency the transition from 78 kDa to 75 kDa calpain forms.

The protein localises to the cytoplasm. It localises to the cell membrane. It catalyses the reaction Broad endopeptidase specificity.. Activated by micromolar concentrations of calcium and inhibited by calpastatin. In terms of biological role, calcium-regulated non-lysosomal thiol-protease which catalyzes limited proteolysis of substrates involved in cytoskeletal remodeling and signal transduction. Proteolytically cleaves CTBP1 at 'Asn-375', 'Gly-388' and 'His-410'. Cleaves and activates caspase-7 (CASP7). This Mus musculus (Mouse) protein is Calpain-1 catalytic subunit.